The sequence spans 959 residues: MSDKTNDDKTLSVNPKKTLTLKRPGVEQSTVRQNFSHGRTKAVVVETKKRKFSRPDEKPEVEAAAAPKPAAPAAAPQQAPASAPVSASAAQASAPQPAPVKAPATKAPAAPSAPVTKPHVAQQRPVHQRPGGQQAQRPRPADRSGMVLNTLSRSEMDARRRALEEAQIREVEERARAVEEAKRRAEEDARRAKEREESARRQAEEEARLKAEAEARRKAEEEAAKRMPQPEARSERRDDARPAPYGARPQQAGRPQGGRPQPAGRPQQGSPRPAPIIADAAPIAGKPLPQSQLRKPGQSDDDDDRRSGAARRGVAAKPEVRAPKVVKGEDDRRRGKLTLTSNLEEEGRSRSLSAMRRRQEKFKRSQMQETREKISREVTIPETITLQELAQRMAERSVDIIKYLMKQGQMMKPGDVIDADTAQLIAEEFGHTVKRVAESDVEEGIFDVADNESAMVSRPPVVTIMGHVDHGKTSLLDAIRHANVVSGEAGGITQHIGAYQVVQNGQKITFIDTPGHAAFTAMRARGAQATDIAILVVAADDSVMPQTIESINHAKAAGVPIIVAINKIDKPAADPQKVCTALLQHEVFVESMGGEVLDVEVSAKNKINLDKLLDAVLLQAEMLDLKADPDRTAEGVVIEAQLDRGRGSVATVLIQKGTLHPGDILVAGSEWGRVRALVNDRGEHVKEAGPAMPVEILGLQGTPQAGDRFAVVANEAKAREIAEYRQRLARDKAVARQSGARGSLEQMMNQLQVSGTKEFPLVIKGDVQGSIEAIINALDKLGTDEVRARIVHSGAGGITESDVSLAEASNAAIIGFNVRANKQARDSAEQQGIEIRYYNIIYDLIDDVKAAMSGLLSPERRETFLGNAEILEVFNITKVGKVAGCRVTEGKVERGAGVRLIRDNVVIHEGKLKTLKRFKDEVAEVPSGQECGMAFENYDDIRAGDVIEAFRVEHVSRTL.

Basic and acidic residues predominate over residues 1-10 (MSDKTNDDKT). The interval 1–374 (MSDKTNDDKT…SQMQETREKI (374 aa)) is disordered. Over residues 27–37 (EQSTVRQNFSH) the composition is skewed to polar residues. 2 stretches are compositionally biased toward low complexity: residues 63–118 (AAAA…VTKP) and 128–138 (QRPGGQQAQRP). Composition is skewed to basic and acidic residues over residues 154 to 225 (SEMD…EAAK) and 232 to 241 (ARSERRDDAR). Residues 246–284 (GARPQQAGRPQGGRPQPAGRPQQGSPRPAPIIADAAPIA) show a composition bias toward low complexity. Residues 318–333 (PEVRAPKVVKGEDDRR) are compositionally biased toward basic and acidic residues. The region spanning 457-626 (SRPPVVTIMG…LLQAEMLDLK (170 aa)) is the tr-type G domain. A G1 region spans residues 466–473 (GHVDHGKT). Position 466–473 (466–473 (GHVDHGKT)) interacts with GTP. A G2 region spans residues 491–495 (GITQH). A G3 region spans residues 512 to 515 (DTPG). GTP is bound by residues 512-516 (DTPGH) and 566-569 (NKID). Residues 566-569 (NKID) are G4. Residues 602 to 604 (SAK) are G5.

Belongs to the TRAFAC class translation factor GTPase superfamily. Classic translation factor GTPase family. IF-2 subfamily.

Its subcellular location is the cytoplasm. One of the essential components for the initiation of protein synthesis. Protects formylmethionyl-tRNA from spontaneous hydrolysis and promotes its binding to the 30S ribosomal subunits. Also involved in the hydrolysis of GTP during the formation of the 70S ribosomal complex. The sequence is that of Translation initiation factor IF-2 from Brucella ovis (strain ATCC 25840 / 63/290 / NCTC 10512).